Consider the following 547-residue polypeptide: ATP synthase subunit alpha (547 aa).

Gly172 to Thr179 serves as a coordination point for ATP.

It belongs to the ATPase alpha/beta chains family. As to quaternary structure, F-type ATPases have 2 components, CF(1) - the catalytic core - and CF(0) - the membrane proton channel. CF(1) has five subunits: alpha(3), beta(3), gamma(1), delta(1), epsilon(1). CF(0) has three main subunits: a(1), b(2) and c(9-12). The alpha and beta chains form an alternating ring which encloses part of the gamma chain. CF(1) is attached to CF(0) by a central stalk formed by the gamma and epsilon chains, while a peripheral stalk is formed by the delta and b chains.

Its subcellular location is the cell membrane. The catalysed reaction is ATP + H2O + 4 H(+)(in) = ADP + phosphate + 5 H(+)(out). Its function is as follows. Produces ATP from ADP in the presence of a proton gradient across the membrane. The alpha chain is a regulatory subunit. The protein is ATP synthase subunit alpha of Rhodococcus opacus (strain B4).